The sequence spans 252 residues: Protein HEAT-INDUCED TAS1 TARGET 2 (252 aa).

It belongs to the heat induced plant HTT protein family. As to expression, expressed ubiquitously, including in seedlings, leaves, stems, inflorescences and siliques.

Its subcellular location is the cytoplasm. It localises to the nucleus. Functionally, mediates both basal and acquired thermotolerance via HSFA1s-directed pathways (e.g. HSFA1A, HSFA1B, and HSFA1D). Triggers the expression of HSFA1A and HSFA1B. This Arabidopsis thaliana (Mouse-ear cress) protein is Protein HEAT-INDUCED TAS1 TARGET 2.